Consider the following 138-residue polypeptide: Large ribosomal subunit protein uL16 (138 aa).

The segment covering 1-19 (MLIPRKVKHRKQHHPKKKG) has biased composition (basic residues). The interval 1–24 (MLIPRKVKHRKQHHPKKKGTASGG) is disordered.

Belongs to the universal ribosomal protein uL16 family. As to quaternary structure, part of the 50S ribosomal subunit.

Its function is as follows. Binds 23S rRNA and is also seen to make contacts with the A and possibly P site tRNAs. The sequence is that of Large ribosomal subunit protein uL16 from Mycobacteroides abscessus (strain ATCC 19977 / DSM 44196 / CCUG 20993 / CIP 104536 / JCM 13569 / NCTC 13031 / TMC 1543 / L948) (Mycobacterium abscessus).